The primary structure comprises 480 residues: Glutamate--tRNA ligase (480 aa).

The 'HIGH' region motif lies at 12-22 (PSPTGAPHLGL). A 'KMSKS' region motif is present at residues 255–259 (KLSKR). Lysine 258 is a binding site for ATP.

The protein belongs to the class-I aminoacyl-tRNA synthetase family. Glutamate--tRNA ligase type 1 subfamily. In terms of assembly, monomer.

The protein localises to the cytoplasm. The enzyme catalyses tRNA(Glu) + L-glutamate + ATP = L-glutamyl-tRNA(Glu) + AMP + diphosphate. Functionally, catalyzes the attachment of glutamate to tRNA(Glu) in a two-step reaction: glutamate is first activated by ATP to form Glu-AMP and then transferred to the acceptor end of tRNA(Glu). The sequence is that of Glutamate--tRNA ligase from Tropheryma whipplei (strain TW08/27) (Whipple's bacillus).